Here is a 349-residue protein sequence, read N- to C-terminus: Protein-arginine kinase (349 aa).

One can recognise a Phosphagen kinase C-terminal domain in the interval isoleucine 24–alanine 252. Residues serine 27–arginine 31, histidine 89, arginine 123, arginine 174–methionine 178, and arginine 205–glutamate 210 contribute to the ATP site. An RDXXRA motif of the pArg binding pocket involved in allosteric regulation motif is present at residues arginine 335–alanine 340.

The protein belongs to the ATP:guanido phosphotransferase family.

It catalyses the reaction L-arginyl-[protein] + ATP = N(omega)-phospho-L-arginyl-[protein] + ADP + H(+). Appears to be allosterically activated by the binding of pArg-containing polypeptides to the pArg-binding pocket localized in the C-terminal domain of McsB. In terms of biological role, catalyzes the specific phosphorylation of arginine residues in proteins. This chain is Protein-arginine kinase, found in Halothermothrix orenii (strain H 168 / OCM 544 / DSM 9562).